The primary structure comprises 488 residues: Catalase (488 aa).

Positions Met1–Ala24 are disordered. Polar residues predominate over residues Leu7 to Thr23. Active-site residues include His55 and Asn128. Tyr338 is a heme binding site.

This sequence belongs to the catalase family. It depends on heme as a cofactor.

The protein localises to the cytoplasm. It carries out the reaction 2 H2O2 = O2 + 2 H2O. Functionally, decomposes hydrogen peroxide into water and oxygen; serves to protect cells from the toxic effects of hydrogen peroxide. This Listeria innocua serovar 6a (strain ATCC BAA-680 / CLIP 11262) protein is Catalase (kat).